A 129-amino-acid chain; its full sequence is Small ribosomal subunit protein uS11 (129 aa).

Belongs to the universal ribosomal protein uS11 family. In terms of assembly, part of the 30S ribosomal subunit. Interacts with proteins S7 and S18. Binds to IF-3.

Located on the platform of the 30S subunit, it bridges several disparate RNA helices of the 16S rRNA. Forms part of the Shine-Dalgarno cleft in the 70S ribosome. In Cereibacter sphaeroides (strain ATCC 17025 / ATH 2.4.3) (Rhodobacter sphaeroides), this protein is Small ribosomal subunit protein uS11.